The primary structure comprises 121 residues: Immunoglobulin kappa variable 2-40 (121 aa).

Positions 1–19 (MRLPAQLLGLLMLWVPGSS) are cleaved as a signal peptide. The 102-residue stretch at 20 to 121 (EDIVMTQTPL…YYCMQRIEFP (102 aa)) folds into the Ig-like domain. The framework-1 stretch occupies residues 21–43 (DIVMTQTPLSLPVTPGEPASISC). An intrachain disulfide couples C43 to C114. The complementarity-determining-1 stretch occupies residues 44-60 (RSSQSLLDSDDGNTYLD). The framework-2 stretch occupies residues 61 to 75 (WYLQKPGQSPQLLIY). The complementarity-determining-2 stretch occupies residues 76 to 82 (TLSYRAS). Residues 83–114 (GVPDRFSGSGSGTDFTLKISRVEAEDVGVYYC) form a framework-3 region. Residues 115–121 (MQRIEFP) form a complementarity-determining-3 region.

As to quaternary structure, immunoglobulins are composed of two identical heavy chains and two identical light chains; disulfide-linked.

Its subcellular location is the secreted. The protein localises to the cell membrane. Its function is as follows. V region of the variable domain of immunoglobulin light chains that participates in the antigen recognition. Immunoglobulins, also known as antibodies, are membrane-bound or secreted glycoproteins produced by B lymphocytes. In the recognition phase of humoral immunity, the membrane-bound immunoglobulins serve as receptors which, upon binding of a specific antigen, trigger the clonal expansion and differentiation of B lymphocytes into immunoglobulins-secreting plasma cells. Secreted immunoglobulins mediate the effector phase of humoral immunity, which results in the elimination of bound antigens. The antigen binding site is formed by the variable domain of one heavy chain, together with that of its associated light chain. Thus, each immunoglobulin has two antigen binding sites with remarkable affinity for a particular antigen. The variable domains are assembled by a process called V-(D)-J rearrangement and can then be subjected to somatic hypermutations which, after exposure to antigen and selection, allow affinity maturation for a particular antigen. The sequence is that of Immunoglobulin kappa variable 2-40 from Homo sapiens (Human).